The sequence spans 823 residues: High affinity cAMP-specific and IBMX-insensitive 3',5'-cyclic phosphodiesterase 8A (823 aa).

A disordered region spans residues 1–55 (MGCAPSIHTSENRTFSHSDGEDEDVDVDVPGPAPRSIQRWSTAPGLVEPQPRDNG). Basic and acidic residues predominate over residues 10–19 (SENRTFSHSD). In terms of domain architecture, PAS spans 209–280 (ACNSVFTALE…AINSCVTVDK (72 aa)). The 43-residue stretch at 283–325 (QGVYHTQKKNGDNIQQNVKIIPVIGQGGKIRHYVSIIRVCNGN) folds into the PAC domain. Residues 338 to 373 (DSQTDNQAGKHKDRRKHSMDAKAVSSRTSDVSSQRR) form a disordered region. The residue at position 355 (serine 355) is a Phosphoserine; by PKA. Serine 382 and serine 452 each carry phosphoserine. Tyrosine 456 is subject to Phosphotyrosine. Residues 475 to 814 (SLHDVPPRIA…RYWKGLDEKK (340 aa)) form the PDEase domain. Residue histidine 551 is the Proton donor of the active site. A divalent metal cation-binding residues include histidine 555, histidine 591, aspartate 592, and aspartate 720.

It belongs to the cyclic nucleotide phosphodiesterase family. PDE8 subfamily. As to quaternary structure, interacts with RAF1. The interaction promotes RAF1 activity. A divalent metal cation is required as a cofactor. In terms of processing, phosphorylated at Ser-355 by PKA under elevated cAMP conditions, this enhances catalytic activity. Expressed in multiple tissues, with highest levels in testis, followed by liver, heart, skeletal muscle, and kidney. In the testis, expressed specifically in the seminiferous tubules, in postmitotic pachytene spermatocytes. Low expression, if any, in lung, smooth muscle, pancreas, thyroid, thymus, submaxillary gland, spleen, prostate, epididymus, uterus.

The catalysed reaction is 3',5'-cyclic AMP + H2O = AMP + H(+). It participates in purine metabolism; 3',5'-cyclic AMP degradation; AMP from 3',5'-cyclic AMP: step 1/1. With respect to regulation, inhibited by dipyridimole. Insensitive to selective PDE inhibitor rolipram and to the non-selective inhibitor, IBMX. Functionally, hydrolyzes the second messenger cAMP, which is a key regulator of many important physiological processes. May be involved in maintaining basal levels of the cyclic nucleotide and/or in the cAMP regulation of germ cell development. Binding to RAF1 reduces RAF1 'Ser-259' inhibitory-phosphorylation and stimulates RAF1-dependent EGF-activated ERK-signaling. Protects against cell death induced by hydrogen peroxide and staurosporine. This chain is High affinity cAMP-specific and IBMX-insensitive 3',5'-cyclic phosphodiesterase 8A (Pde8a), found in Mus musculus (Mouse).